Consider the following 397-residue polypeptide: Elongation factor Tu (397 aa).

One can recognise a tr-type G domain in the interval 10–206 (KPHVNIGTIG…AVDQNIPEPQ (197 aa)). The segment at 19 to 26 (GHIDHGKT) is G1. Residue 19-26 (GHIDHGKT) participates in GTP binding. Thr26 contacts Mg(2+). The interval 62 to 66 (GITIS) is G2. The segment at 83–86 (DCPG) is G3. GTP contacts are provided by residues 83–87 (DCPGH) and 138–141 (NKSD). The segment at 138-141 (NKSD) is G4. The interval 176–178 (SAL) is G5.

The protein belongs to the TRAFAC class translation factor GTPase superfamily. Classic translation factor GTPase family. EF-Tu/EF-1A subfamily. Monomer.

Its subcellular location is the cytoplasm. The catalysed reaction is GTP + H2O = GDP + phosphate + H(+). In terms of biological role, GTP hydrolase that promotes the GTP-dependent binding of aminoacyl-tRNA to the A-site of ribosomes during protein biosynthesis. The protein is Elongation factor Tu of Thermobifida fusca (strain YX).